Here is a 210-residue protein sequence, read N- to C-terminus: Probable GTP-binding protein EngB (210 aa).

The 175-residue stretch at 25–199 (TGIEVAFAGR…RQKLDTWFSE (175 aa)) folds into the EngB-type G domain. GTP-binding positions include 33-40 (GRSNAGKS), 60-64 (GRTQL), 78-81 (DLPG), 145-148 (TKTD), and 178-180 (FSS). Residues S40 and T62 each contribute to the Mg(2+) site.

It belongs to the TRAFAC class TrmE-Era-EngA-EngB-Septin-like GTPase superfamily. EngB GTPase family. Mg(2+) serves as cofactor.

Necessary for normal cell division and for the maintenance of normal septation. This is Probable GTP-binding protein EngB from Escherichia coli O6:K15:H31 (strain 536 / UPEC).